The chain runs to 157 residues: Probable succinate transporter subunit YjjB (157 aa).

The next 4 membrane-spanning stretches (helical) occupy residues leucine 8–phenylalanine 28, methionine 50–valine 70, valine 87–isoleucine 107, and phenylalanine 129–tryptophan 149.

Belongs to the ThrE exporter (TC 2.A.79) family. As to quaternary structure, the transporter is composed of YjjB and YjjP.

It localises to the cell inner membrane. In terms of biological role, involved in succinate export with YjjP. Both proteins are required for export. This chain is Probable succinate transporter subunit YjjB, found in Shigella flexneri serotype 5b (strain 8401).